The following is a 231-amino-acid chain: Isoprenyl transferase (231 aa).

D14 is an active-site residue. A Mg(2+)-binding site is contributed by D14. Residues 15–18 (GNGR), W19, R27, H31, and 59–61 (STE) each bind substrate. The Proton acceptor role is filled by N62. Substrate is bound by residues W63, R65, R176, and 182-184 (RIS). Residue E195 participates in Mg(2+) binding.

The protein belongs to the UPP synthase family. Homodimer. Mg(2+) is required as a cofactor.

Its function is as follows. Catalyzes the condensation of isopentenyl diphosphate (IPP) with allylic pyrophosphates generating different type of terpenoids. The protein is Isoprenyl transferase of Aquifex pyrophilus.